The chain runs to 305 residues: Lysosomal thioesterase PPT2 (305 aa).

An N-terminal signal peptide occupies residues 1 to 32 (MLGLPERRLPSAEFLLLLPFLLLLLLLLPAAP). 2 disulfides stabilise this stretch: Cys112-Cys120 and Cys168-Cys179. Ser114 functions as the Nucleophile in the catalytic mechanism. A glycan (N-linked (GlcNAc...) asparagine) is linked at Asn193. Active-site residues include Asp231 and His286. The cysteines at positions 279 and 299 are disulfide-linked.

It belongs to the palmitoyl-protein thioesterase family.

Its subcellular location is the lysosome. It catalyses the reaction hexadecanoyl-CoA + H2O = hexadecanoate + CoA + H(+). The catalysed reaction is S-hexadecanoyl-N-acetylcysteamine + H2O = N-acetylcysteamine + hexadecanoate + H(+). Catalyzes the cleavage of thioester bonds from S-palmitoyl-CoA or S-palmitoyl-N-acetylcysteamine (unbranched structures) but does not have activity against palmitoylcysteine or palmitoylated proteins, branched structures or bulky head groups. Conversely, hydrolyzes both long and short chain fatty acyl-CoA substrate. This is Lysosomal thioesterase PPT2 (PPT2) from Bos taurus (Bovine).